Reading from the N-terminus, the 509-residue chain is Legumin A (509 aa).

Positions 1–21 (MAINPSLLFLSLLFLFNGCLA) are cleaved as a signal peptide. Cystine bridges form between cysteine 34–cysteine 67 and cysteine 110–cysteine 331. The Cupin type-1 1 domain occupies 39-273 (LRASAPQTRI…AFNVDHDIIR (235 aa)). Disordered stretches follow at residues 187–248 (AGNP…ESSS) and 298–325 (PRMEEEEREERQQEQRYRHTRGGSQDNG). Residues 212–228 (EESEEEEGEGEEEEEED) show a composition bias toward acidic residues. Residues 299 to 314 (RMEEEEREERQQEQRY) are compositionally biased toward basic and acidic residues. In terms of domain architecture, Cupin type-1 2 spans 337–486 (ENLADPERAD…SYQVSREDAR (150 aa)).

This sequence belongs to the 11S seed storage protein (globulins) family. Hexamer; each subunit is composed of an acidic and a basic chain derived from a single precursor and linked by a disulfide bond.

This is a seed storage protein. The sequence is that of Legumin A (LEGA) from Gossypium hirsutum (Upland cotton).